The following is a 170-amino-acid chain: Ureidoglycolate lyase (170 aa).

Belongs to the ureidoglycolate lyase family. As to quaternary structure, homodimer. Requires Ni(2+) as cofactor.

It carries out the reaction (S)-ureidoglycolate = urea + glyoxylate. Its pathway is nitrogen metabolism; (S)-allantoin degradation. Its function is as follows. Catalyzes the catabolism of the allantoin degradation intermediate (S)-ureidoglycolate, generating urea and glyoxylate. Involved in the utilization of allantoin as nitrogen source. The polypeptide is Ureidoglycolate lyase (Pseudomonas syringae pv. tomato (strain ATCC BAA-871 / DC3000)).